We begin with the raw amino-acid sequence, 141 residues long: Large ribosomal subunit protein uL11 (141 aa).

This sequence belongs to the universal ribosomal protein uL11 family. As to quaternary structure, part of the ribosomal stalk of the 50S ribosomal subunit. Interacts with L10 and the large rRNA to form the base of the stalk. L10 forms an elongated spine to which L12 dimers bind in a sequential fashion forming a multimeric L10(L12)X complex. In terms of processing, one or more lysine residues are methylated.

In terms of biological role, forms part of the ribosomal stalk which helps the ribosome interact with GTP-bound translation factors. This Natranaerobius thermophilus (strain ATCC BAA-1301 / DSM 18059 / JW/NM-WN-LF) protein is Large ribosomal subunit protein uL11.